The sequence spans 484 residues: Glutamyl-tRNA(Gln) amidotransferase subunit A (484 aa).

Residues Lys-76 and Ser-151 each act as charge relay system in the active site. The active-site Acyl-ester intermediate is the Ser-175.

Belongs to the amidase family. GatA subfamily. As to quaternary structure, heterotrimer of A, B and C subunits.

It carries out the reaction L-glutamyl-tRNA(Gln) + L-glutamine + ATP + H2O = L-glutaminyl-tRNA(Gln) + L-glutamate + ADP + phosphate + H(+). In terms of biological role, allows the formation of correctly charged Gln-tRNA(Gln) through the transamidation of misacylated Glu-tRNA(Gln) in organisms which lack glutaminyl-tRNA synthetase. The reaction takes place in the presence of glutamine and ATP through an activated gamma-phospho-Glu-tRNA(Gln). This is Glutamyl-tRNA(Gln) amidotransferase subunit A from Alkalilimnicola ehrlichii (strain ATCC BAA-1101 / DSM 17681 / MLHE-1).